Here is a 567-residue protein sequence, read N- to C-terminus: Wee1-like protein kinase 2 (567 aa).

Composition is skewed to basic and acidic residues over residues 1–12 (MDDKDIDKELRQ), 25–35 (EGQKKVEESRE), 42–51 (EKGEVQDSEA), and 64–77 (HELD…KESP). A disordered region spans residues 1–117 (MDDKDIDKEL…DSPSTPKTML (117 aa)). Ser76 carries the post-translational modification Phosphoserine. Positions 173 to 175 (KRK) match the Nuclear localization signal motif. The Protein kinase domain maps to 212 to 486 (FLEVEKIGVG…AAALARNTVL (275 aa)). Residues 218-226 (IGVGEFGTV) and Lys241 each bind ATP. Residues 315 to 329 (KLKDILLQISLGLNY) carry the Nuclear export signal motif. The active-site Proton acceptor is the Asp339. Mg(2+) is bound by residues Asn344 and Asp380. Positions 494–519 (EELQQQLNLEKFKTATLERELREAQQ) form a coiled coil. The segment at 514–567 (LREAQQAQSPQGYTHHGDTGVSGTHTGSRSTKRLVGGKSARSSSFTSGEREPLH) is disordered.

This sequence belongs to the protein kinase superfamily. Ser/Thr protein kinase family. WEE1 subfamily. In terms of processing, phosphorylated on serine residues. Phosphorylation leads to increase its activity. In terms of tissue distribution, expressed in oocytes (at protein level). May also be expressed in testis.

It is found in the nucleus. The enzyme catalyses L-tyrosyl-[protein] + ATP = O-phospho-L-tyrosyl-[protein] + ADP + H(+). In terms of biological role, oocyte-specific protein tyrosine kinase that phosphorylates and inhibits CDK1/CDC2 and acts as a key regulator of meiosis during both prophase I and metaphase II. Required to maintain meiotic arrest in oocytes during the germinal vesicle (GV) stage, a long period of quiescence at dictyate prophase I, by phosphorylating CDK1 at 'Tyr-15', leading to inhibit CDK1 activity and prevent meiotic reentry. Also required for metaphase II exit during egg activation by phosphorylating CDK1 at 'Tyr-15', to ensure exit from meiosis in oocytes and promote pronuclear formation. In Homo sapiens (Human), this protein is Wee1-like protein kinase 2 (WEE2).